The following is a 141-amino-acid chain: MNASEKLSQKAAQSVTRRFITWLKSPDFRKYLCSTHFWGPLSNFGIPIAAILDLKKDPRLISGRMTGALILYSSVFMRYAWMVSPRNYLLLGCHAFNTTVQTAQGIRFVNFWYGKEGASKQSVFENIMQAAKHPESGTRQK.

The next 2 helical transmembrane spans lie at 31–52 and 60–82; these read YLCSTHFWGPLSNFGIPIAAIL and LISGRMTGALILYSSVFMRYAWM.

This sequence belongs to the mitochondrial pyruvate carrier (MPC) (TC 2.A.105) family. In terms of assembly, the functional 150 kDa pyruvate import complex is a heteromer of mpc1 and mpc2.

Its subcellular location is the mitochondrion. It localises to the mitochondrion inner membrane. Its function is as follows. Mediates the uptake of pyruvate into mitochondria. The protein is Probable mitochondrial pyruvate carrier 1 of Schizosaccharomyces pombe (strain 972 / ATCC 24843) (Fission yeast).